The primary structure comprises 288 residues: MEGKEEDVRLGANRYSERQPIGTAAQGTEEKDYKEPPPAPLFEAEELTSWSFYRAGIAEFVATFLFLYISILTVMGVSKSSSKCATVGIQGIAWSFGGMIFALVYCTAGISGGHINPAVTFGLFLARKLSLTRALFYMVMQCLGAICGAGVVKGFQEGLYMGAGGGANAVNPGYTKGDGLGAEIVGTFVLVYTVFSATDAKRSARDSHVPILAPLPIGFAVFLVHLATIPITGTGINPARSLGAAIVYNRSHAWNDHWIFWVGPFIGAALAAIYHVVIIRALPFKSRD.

Positions 1 to 36 are disordered; the sequence is MEGKEEDVRLGANRYSERQPIGTAAQGTEEKDYKEP. Helical transmembrane passes span 57–77 and 92–114; these read IAEFVATFLFLYISILTVMGV and IAWSFGGMIFALVYCTAGISGGH. The NPA 1 motif lies at 116 to 118; the sequence is NPA. Helical transmembrane passes span 135-155, 177-197, and 211-231; these read LFYMVMQCLGAICGAGVVKGF, GDGLGAEIVGTFVLVYTVFSA, and ILAPLPIGFAVFLVHLATIPI. Residues 237–239 carry the NPA 2 motif; sequence NPA. Residues 259-279 form a helical membrane-spanning segment; the sequence is IFWVGPFIGAALAAIYHVVII.

This sequence belongs to the MIP/aquaporin (TC 1.A.8) family. PIP (TC 1.A.8.11) subfamily. As to expression, highly expressed in roots and at lower levels in anthers and silks.

The protein resides in the cell membrane. Its function is as follows. Water channel required to facilitate the transport of water across cell membrane. The protein is Aquaporin PIP1-5 (PIP1-5) of Zea mays (Maize).